The chain runs to 25 residues: Chaperone protein DnaK (25 aa).

It belongs to the heat shock protein 70 family.

Its function is as follows. Acts as a chaperone. The polypeptide is Chaperone protein DnaK (dnaK) (Acinetobacter calcoaceticus).